The following is a 177-amino-acid chain: Peptide methionine sulfoxide reductase MsrA 2 (177 aa).

The active site involves Cys-12.

It belongs to the MsrA Met sulfoxide reductase family.

It catalyses the reaction L-methionyl-[protein] + [thioredoxin]-disulfide + H2O = L-methionyl-(S)-S-oxide-[protein] + [thioredoxin]-dithiol. The enzyme catalyses [thioredoxin]-disulfide + L-methionine + H2O = L-methionine (S)-S-oxide + [thioredoxin]-dithiol. In terms of biological role, has an important function as a repair enzyme for proteins that have been inactivated by oxidation. Catalyzes the reversible oxidation-reduction of methionine sulfoxide in proteins to methionine. This Staphylococcus aureus (strain Mu50 / ATCC 700699) protein is Peptide methionine sulfoxide reductase MsrA 2 (msrA2).